We begin with the raw amino-acid sequence, 310 residues long: p-hydroxybenzoic acid efflux pump subunit AaeA (310 aa).

The chain crosses the membrane as a helical span at residues 12–32 (AITVVLVILAFIAIFNAWVYY).

This sequence belongs to the membrane fusion protein (MFP) (TC 8.A.1) family.

Its subcellular location is the cell inner membrane. In terms of biological role, forms an efflux pump with AaeB. The polypeptide is p-hydroxybenzoic acid efflux pump subunit AaeA (Shigella flexneri).